We begin with the raw amino-acid sequence, 336 residues long: Type II methyltransferase M2.HphI (336 aa).

This sequence belongs to the N(4)/N(6)-methyltransferase family.

The catalysed reaction is a 2'-deoxyadenosine in DNA + S-adenosyl-L-methionine = an N(6)-methyl-2'-deoxyadenosine in DNA + S-adenosyl-L-homocysteine + H(+). In terms of biological role, an alpha subtype methylase that recognizes the double-stranded sequence 5'-GGTGA-3', probably methylates A-5 on the top strand, and protects the DNA from cleavage by the HphI endonuclease. This is Type II methyltransferase M2.HphI (hphIBM) from Haemophilus parahaemolyticus.